We begin with the raw amino-acid sequence, 310 residues long: Homoserine O-acetyltransferase (310 aa).

Cysteine 142 serves as the catalytic Acyl-thioester intermediate. Residues lysine 163 and serine 192 each contribute to the substrate site. Histidine 235 serves as the catalytic Proton acceptor. Glutamate 237 is a catalytic residue. Arginine 249 contributes to the substrate binding site.

The protein belongs to the MetA family.

The protein localises to the cytoplasm. The catalysed reaction is L-homoserine + acetyl-CoA = O-acetyl-L-homoserine + CoA. The protein operates within amino-acid biosynthesis; L-methionine biosynthesis via de novo pathway; O-acetyl-L-homoserine from L-homoserine: step 1/1. Its function is as follows. Transfers an acetyl group from acetyl-CoA to L-homoserine, forming acetyl-L-homoserine. This Parabacteroides distasonis (strain ATCC 8503 / DSM 20701 / CIP 104284 / JCM 5825 / NCTC 11152) protein is Homoserine O-acetyltransferase.